The chain runs to 298 residues: N-acetylmuramic acid 6-phosphate etherase (298 aa).

Residues 55–218 enclose the SIS domain; it reads IHTQVSGGGR…STGLMIKSGK (164 aa). Glutamate 83 (proton donor) is an active-site residue. Glutamate 114 is a catalytic residue.

Belongs to the GCKR-like family. MurNAc-6-P etherase subfamily. As to quaternary structure, homodimer.

It carries out the reaction N-acetyl-D-muramate 6-phosphate + H2O = N-acetyl-D-glucosamine 6-phosphate + (R)-lactate. It participates in amino-sugar metabolism; 1,6-anhydro-N-acetylmuramate degradation. Its pathway is amino-sugar metabolism; N-acetylmuramate degradation. It functions in the pathway cell wall biogenesis; peptidoglycan recycling. In terms of biological role, specifically catalyzes the cleavage of the D-lactyl ether substituent of MurNAc 6-phosphate, producing GlcNAc 6-phosphate and D-lactate. Together with AnmK, is also required for the utilization of anhydro-N-acetylmuramic acid (anhMurNAc) either imported from the medium or derived from its own cell wall murein, and thus plays a role in cell wall recycling. The sequence is that of N-acetylmuramic acid 6-phosphate etherase from Escherichia coli O127:H6 (strain E2348/69 / EPEC).